Reading from the N-terminus, the 158-residue chain is Protein EOLA1 (158 aa).

An ASCH domain is found at 6–92 (LSFRQPYAGF…IAGLVDIGET (87 aa)).

The protein belongs to the EOLA family. As to quaternary structure, interacts with MT2A. Expressed primarily in heart, skeletal muscle, kidney, liver and placenta. Relatively high level of expression in spleen, colon and small intestine. Almost no expression in brain, thymus, lung and peripheral blood leukocytes. Expressed in epithelial cells (at protein level).

Functionally, may play a role in cell protection during the inflammatory response. In epithelial cells, negatively regulates IL6 production and apoptosis through the regulation of MT2A expression. The protein is Protein EOLA1 of Homo sapiens (Human).